A 406-amino-acid chain; its full sequence is Multifunctional CCA protein (406 aa).

ATP is bound by residues G8 and R11. The CTP site is built by G8 and R11. Positions 21 and 23 each coordinate Mg(2+). R91, R137, and R140 together coordinate ATP. 3 residues coordinate CTP: R91, R137, and R140. Residues 228–329 enclose the HD domain; the sequence is TGIHTLMVAQ…IKILNKFDVW (102 aa).

Belongs to the tRNA nucleotidyltransferase/poly(A) polymerase family. Bacterial CCA-adding enzyme type 1 subfamily. In terms of assembly, monomer. Can also form homodimers and oligomers. Mg(2+) is required as a cofactor. The cofactor is Ni(2+).

It carries out the reaction a tRNA precursor + 2 CTP + ATP = a tRNA with a 3' CCA end + 3 diphosphate. It catalyses the reaction a tRNA with a 3' CCA end + 2 CTP + ATP = a tRNA with a 3' CCACCA end + 3 diphosphate. Functionally, catalyzes the addition and repair of the essential 3'-terminal CCA sequence in tRNAs without using a nucleic acid template. Adds these three nucleotides in the order of C, C, and A to the tRNA nucleotide-73, using CTP and ATP as substrates and producing inorganic pyrophosphate. tRNA 3'-terminal CCA addition is required both for tRNA processing and repair. Also involved in tRNA surveillance by mediating tandem CCA addition to generate a CCACCA at the 3' terminus of unstable tRNAs. While stable tRNAs receive only 3'-terminal CCA, unstable tRNAs are marked with CCACCA and rapidly degraded. This chain is Multifunctional CCA protein, found in Vibrio campbellii (strain ATCC BAA-1116).